Reading from the N-terminus, the 1624-residue chain is NAD-specific glutamate dehydrogenase (1624 aa).

Residue Lys-845 is part of the active site.

Belongs to the Glu/Leu/Phe/Val dehydrogenases family. As to quaternary structure, interacts with (unphosphorylated) GarA.

It carries out the reaction L-glutamate + NAD(+) + H2O = 2-oxoglutarate + NH4(+) + NADH + H(+). Its activity is regulated as follows. Activity is inhibited by unphosphorylated GarA. Catalyzes the reversible conversion of L-glutamate to 2-oxoglutarate. The protein is NAD-specific glutamate dehydrogenase (gdh) of Mycobacterium tuberculosis (strain ATCC 25618 / H37Rv).